The following is a 179-amino-acid chain: Large ribosomal subunit protein uL6 (179 aa).

The protein belongs to the universal ribosomal protein uL6 family. In terms of assembly, part of the 50S ribosomal subunit.

Its function is as follows. This protein binds to the 23S rRNA, and is important in its secondary structure. It is located near the subunit interface in the base of the L7/L12 stalk, and near the tRNA binding site of the peptidyltransferase center. This chain is Large ribosomal subunit protein uL6, found in Synechococcus sp. (strain RCC307).